The sequence spans 531 residues: Calcium-dependent protein kinase 21 (531 aa).

Residues 1 to 10 (MGCFSSKHRK) are compositionally biased toward basic residues. A disordered region spans residues 1–62 (MGCFSSKHRK…STPSSNPVSV (62 aa)). A lipid anchor (N-myristoyl glycine) is attached at glycine 2. Positions 48-60 (IHQQISTPSSNPV) are enriched in polar residues. A Protein kinase domain is found at 80-338 (YSLGKELGRG…AAQVLEHPWI (259 aa)). Residues 86–94 (LGRGQFGIT) and lysine 109 contribute to the ATP site. Aspartate 204 acts as the Proton acceptor in catalysis. Serine 244 carries the post-translational modification Phosphoserine. Residues 343 to 373 (APDKPIDSAVLSRMKQFRAMNKLKKLALKVI) form an autoinhibitory domain region. 4 EF-hand domains span residues 380–415 (EEIK…LGSR), 416–451 (LSET…RYKL), 452–487 (DRDE…YGMG), and 488–522 (DEAS…GSTQ). Residues aspartate 393, aspartate 395, serine 397, threonine 399, glutamate 404, aspartate 429, aspartate 431, asparagine 433, threonine 435, glutamate 440, aspartate 465, aspartate 467, serine 469, histidine 471, glutamate 476, aspartate 500, aspartate 502, aspartate 504, arginine 506, and glutamate 511 each coordinate Ca(2+).

Belongs to the protein kinase superfamily. Ser/Thr protein kinase family. CDPK subfamily. Interacts with SLAC1 and ABI1.

The protein resides in the cell membrane. The enzyme catalyses L-seryl-[protein] + ATP = O-phospho-L-seryl-[protein] + ADP + H(+). It carries out the reaction L-threonyl-[protein] + ATP = O-phospho-L-threonyl-[protein] + ADP + H(+). Activated by calcium. Autophosphorylation may play an important role in the regulation of the kinase activity. Its function is as follows. May play a role in signal transduction pathways that involve calcium as a second messenger. Mediates the phosphorylation and activation of the S-type anion efflux channel SLAC1. In Arabidopsis thaliana (Mouse-ear cress), this protein is Calcium-dependent protein kinase 21 (CPK21).